We begin with the raw amino-acid sequence, 114 residues long: U17-barytoxin-Tl1d (114 aa).

The N-terminal stretch at 1–20 (MKTIIVFLSLLVLATKFGDA) is a signal peptide. The propeptide occupies 21–74 (NEGVNQEQMKEVIQNEFREDFLNEMAAMSLLQQLEAIESTLLEKEADRNSRQKR). Disulfide bonds link Cys75–Cys88, Cys82–Cys93, and Cys87–Cys108.

It belongs to the neurotoxin 14 (magi-1) family. 03 (ICK-30-40) subfamily. In terms of tissue distribution, expressed by the venom gland.

Its subcellular location is the secreted. Functionally, ion channel inhibitor. The sequence is that of U17-barytoxin-Tl1d from Trittame loki (Brush-footed trapdoor spider).